A 351-amino-acid chain; its full sequence is GDP-mannose 4,6-dehydratase (351 aa).

NADP(+)-binding positions include 11–16 (GVTGQD), 66–67 (DM), 88–92 (LAAQS), and tyrosine 103. Threonine 135 is a catalytic residue. Catalysis depends on nucleophile residues glutamate 137 and tyrosine 159. Positions 163, 189, and 194 each coordinate NADP(+).

It belongs to the NAD(P)-dependent epimerase/dehydratase family. GDP-mannose 4,6-dehydratase subfamily. The cofactor is NADP(+).

The enzyme catalyses GDP-alpha-D-mannose = GDP-4-dehydro-alpha-D-rhamnose + H2O. The protein operates within nucleotide-sugar biosynthesis; GDP-L-fucose biosynthesis via de novo pathway; GDP-L-fucose from GDP-alpha-D-mannose: step 1/2. Catalyzes the conversion of GDP-D-mannose to GDP-4-dehydro-6-deoxy-D-mannose. The polypeptide is GDP-mannose 4,6-dehydratase (Sinorhizobium fredii (strain HH103)).